Here is a 414-residue protein sequence, read N- to C-terminus: Gamma-glutamyl phosphate reductase (414 aa).

Belongs to the gamma-glutamyl phosphate reductase family.

It is found in the cytoplasm. It carries out the reaction L-glutamate 5-semialdehyde + phosphate + NADP(+) = L-glutamyl 5-phosphate + NADPH + H(+). The protein operates within amino-acid biosynthesis; L-proline biosynthesis; L-glutamate 5-semialdehyde from L-glutamate: step 2/2. Its function is as follows. Catalyzes the NADPH-dependent reduction of L-glutamate 5-phosphate into L-glutamate 5-semialdehyde and phosphate. The product spontaneously undergoes cyclization to form 1-pyrroline-5-carboxylate. The polypeptide is Gamma-glutamyl phosphate reductase (Clostridium botulinum (strain Eklund 17B / Type B)).